Consider the following 130-residue polypeptide: Ribonuclease VapC4 (130 aa).

Residues 7 to 130 (LADTSVFIGI…AMPDVEVITI (124 aa)) enclose the PINc domain. Mg(2+) is bound by residues aspartate 9 and aspartate 98.

The protein belongs to the PINc/VapC protein family. Interacts with cognate antitoxin VapB4. Mg(2+) is required as a cofactor.

It localises to the secreted. Its function is as follows. Toxic component of a type II toxin-antitoxin (TA) system. Probably exerts its toxic effect by binding to mRNA, inhibiting translation. Binds to, recognizes and cleaves ssRNA at ACGC and AC(A/U)GC sequences, usually between the G and C; cleavage is not very efficient, nor is cleavage required to inhibit protein synthesis. Upon expression in situ, in M.smegmatis or E.coli inhibits cell growth and colony formation; in at least E.coli also causes increased levels of cellular RNA. Its toxic effect is neutralized by coexpression with cognate antitoxin VapB4. In Mycobacterium tuberculosis (strain ATCC 25618 / H37Rv), this protein is Ribonuclease VapC4.